The chain runs to 145 residues: Bacilliredoxin Acid345_1880 (145 aa).

This sequence belongs to the bacilliredoxin family.

The chain is Bacilliredoxin Acid345_1880 from Koribacter versatilis (strain Ellin345).